Consider the following 68-residue polypeptide: Large ribosomal subunit protein uL30 (68 aa).

It belongs to the universal ribosomal protein uL30 family. As to quaternary structure, part of the 50S ribosomal subunit.

The protein is Large ribosomal subunit protein uL30 of Bartonella quintana (strain Toulouse) (Rochalimaea quintana).